The following is a 69-amino-acid chain: uncharacterized protein (69 aa).

It is found in the mitochondrion. This is an uncharacterized protein from Marchantia polymorpha (Common liverwort).